A 220-amino-acid polypeptide reads, in one-letter code: Large ribosomal subunit protein bL9 (220 aa).

The segment covering 167 to 184 (AAAEVEQAEDVAAAEQQD) has biased composition (low complexity). The tract at residues 167–220 (AAAEVEQAEDVAAAEQQDSSPVDDHADDADGVADGEGRDEGAGDASDEEEMPST) is disordered. A compositionally biased stretch (acidic residues) spans 211-220 (ASDEEEMPST).

The protein belongs to the bacterial ribosomal protein bL9 family.

In terms of biological role, binds to the 23S rRNA. The sequence is that of Large ribosomal subunit protein bL9 from Anaplasma marginale (strain Florida).